Reading from the N-terminus, the 631-residue chain is Phosphomethylpyrimidine synthase (631 aa).

Substrate-binding positions include Asn-239, Met-268, Tyr-297, His-333, 353–355 (SRG), 394–397 (DGLR), and Glu-433. A Zn(2+)-binding site is contributed by His-437. Substrate is bound at residue Tyr-460. His-501 is a binding site for Zn(2+). Residues Cys-581, Cys-584, and Cys-589 each coordinate [4Fe-4S] cluster.

This sequence belongs to the ThiC family. In terms of assembly, homodimer. It depends on [4Fe-4S] cluster as a cofactor.

The catalysed reaction is 5-amino-1-(5-phospho-beta-D-ribosyl)imidazole + S-adenosyl-L-methionine = 4-amino-2-methyl-5-(phosphooxymethyl)pyrimidine + CO + 5'-deoxyadenosine + formate + L-methionine + 3 H(+). The protein operates within cofactor biosynthesis; thiamine diphosphate biosynthesis. Catalyzes the synthesis of the hydroxymethylpyrimidine phosphate (HMP-P) moiety of thiamine from aminoimidazole ribotide (AIR) in a radical S-adenosyl-L-methionine (SAM)-dependent reaction. The polypeptide is Phosphomethylpyrimidine synthase (Klebsiella pneumoniae (strain 342)).